The chain runs to 1683 residues: MGGVGQCQWPVWQVDDLTPCFQHDYLRILLPAVVIGLSVLNLGFRSARHAASRSKSPSTHAYAPVSNGDNSRPGAHRTDISPDDDAIAQDDEDDDEGLAIGGGRLALVKTATKGSIVQADTPPAQTLSVVVEELAIAGLVAVYVIALLSPKAHGSYTLTGTIIGLTTWVYVLVLATLRLFLGNTQWRVPHLWNHTAAIYSCQWLFLIGIFRSAMVHPSSKLAQILVIVEFALTSLLFFMAITTRKGNKTVLLEWEDGIPPARENLASLFSSFTFSWVDQIVWQGYKEPFEMGKVWNLLPKDKAATVLSHYRRVKKTTKLYWHLLRYFKGDLLSQAGWAVMSGMFTFAPTMLLKAILEYVEEPESAPRSVVWLYVILLPVTDIIRSLGDNRALWIGRKICINVRAILVGEIYAKALRRKAATGKDTVLGSEKKEDKPKGGFISKIKKMLCLGDNDESEDGKDGDKDKEDSSDEQANHGTIINLMSVDSFNVSEVTSYLHFLFASAPTQLLVSVVLLYQVLGMSAIPGFVVMVLLLPVNIGFGRAFNSTQKKIMACSDKRIHSTNEVLQNIRIIKYFAWEHRFSESVDEKRKAELKALRARYMVWACAVAVWNTVPLLITFFSFLMYTTVEKRPLHPSIAFTSISLFMLLRHPLDQLGDMLAHVQEAKVSIDRIEEFLSEEETDKFIQLGEDNVNEEGTRIIALKDAAFIWGGKDIIAADGSQAFRLLDIDTEFMIGKLNVIAGPTGSGKTSLLMALLGEMTLLKGRVYLPGGRSREDVRPDPETGLAETCAYVAQQAWLVNANIKDNILFSARFDEKRYRDVIVACALERDLEILDNGDETLVGEKGITLSGGQKQRISLARAVYSNSKHLLLDDCLSAVDSHTAQWIFNNCIRGPLMKDRTCIMVTHNIPLCVPHSDFVVVMDNGRITHQGRALEVITSGALGEEIAQKAKSETPNISRIPSRVPSSVGEGSGNTLLDTDGDDHLSKPKNAKKAKKAEAMEETKATGAVKWPVMKLYLASMGSWWFWVVAGCIFISQQASDVVSNLWIKQWASQYTTEVSSVPISTSSHMYGTQSFAPTYMVPVQTYVKDQLARNGNATALDIVVNSEVNAQYYLVVLAIIGLAGSLTAFLRDLWIFFGSLTASAKIHTRLLNTVTRAKFRFFDVTPLGQMMNRFSKDMEAVDQEVAPIAIGILSCALGITVTVVLIASITPGFLIAAVFITIAYVLLAKFYLASSRDLKRLESVQRSPLFQQFGETLSGVTTIRAYGDERRFVRDNLTRINGQLRPMIYLWATNRWLAFRTDLLGDFVSFFAGVFVILSIGVIDAGWAGISLSYAIGFAENILWLVRLYSINEQNMNAVERIKEYLEVEQEAAPICEKNRPPQNWPAQGSVEFINYTTSYRKELDPVLRNVTFKISPQEKVGIVGRTGAGKSSLALAIFRALEADGGKILIDGIDIGLIGLRDLREAITIVPQEPTLFTGTIRSNLDPFHLFTDEQIYKSLQRVQLIGPDETIPTADASPVLPASPTTPGGASNKNIFLNLSSKVSESGSNLSQGQRQLLCLARALLKEPRVLVMDEATASIDYATDSKIQDTIREMKDTTIITIAHRLQTIADYDKVLVLDKGEVVEYAHPWELMRKGEGGSFKSMCDMSGDTELLAKAAKKAFDAKKLIDVDDEAADAAP.

A helical membrane pass occupies residues 24-44; the sequence is DYLRILLPAVVIGLSVLNLGF. The tract at residues 53–93 is disordered; sequence RSKSPSTHAYAPVSNGDNSRPGAHRTDISPDDDAIAQDDED. Residues 81-93 are compositionally biased toward acidic residues; the sequence is SPDDDAIAQDDED. Transmembrane regions (helical) follow at residues 127–147, 157–177, 190–210, and 221–241; these read LSVVVEELAIAGLVAVYVIAL, TLTGTIIGLTTWVYVLVLATL, HLWNHTAAIYSCQWLFLIGIF, and LAQILVIVEFALTSLLFFMAI. An N-linked (GlcNAc...) asparagine glycan is attached at Asn-247. 2 helical membrane passes run 336–356 and 368–388; these read GWAVMSGMFTFAPTMLLKAIL and SVVWLYVILLPVTDIIRSLGD. Positions 338–664 constitute an ABC transmembrane type-1 1 domain; the sequence is AVMSGMFTFA…LGDMLAHVQE (327 aa). A disordered region spans residues 451–473; that stretch reads GDNDESEDGKDGDKDKEDSSDEQ. Asn-489 is a glycosylation site (N-linked (GlcNAc...) asparagine). Transmembrane regions (helical) follow at residues 496–516 and 518–538; these read YLHFLFASAPTQLLVSVVLLY and VLGMSAIPGFVVMVLLLPVNI. N-linked (GlcNAc...) asparagine glycosylation occurs at Asn-545. Helical transmembrane passes span 602–622 and 632–648; these read VWACAVAVWNTVPLLITFFSF and PLHPSIAFTSISLFMLL. In terms of domain architecture, ABC transporter 1 spans 700–949; the sequence is IALKDAAFIW…GALGEEIAQK (250 aa). 742–749 is an ATP binding site; it reads GPTGSGKT. The interval 952–998 is disordered; that stretch reads SETPNISRIPSRVPSSVGEGSGNTLLDTDGDDHLSKPKNAKKAKKAE. Asn-956 carries an N-linked (GlcNAc...) asparagine glycan. The chain crosses the membrane as a helical span at residues 1016–1036; the sequence is LYLASMGSWWFWVVAGCIFIS. The region spanning 1028-1351 is the ABC transmembrane type-1 2 domain; sequence VVAGCIFISQ…NILWLVRLYS (324 aa). Asn-1097 is a glycosylation site (N-linked (GlcNAc...) asparagine). Helical transmembrane passes span 1111 to 1131, 1182 to 1202, and 1204 to 1224; these read AQYYLVVLAIIGLAGSLTAFL, VDQEVAPIAIGILSCALGITV, and VVLIASITPGFLIAAVFITIA. A glycan (N-linked (GlcNAc...) asparagine) is linked at Asn-1277. 2 consecutive transmembrane segments (helical) span residues 1304–1324 and 1327–1347; these read LLGDFVSFFAGVFVILSIGVI and GWAGISLSYAIGFAENILWLV. The ABC transporter 2 domain occupies 1392–1649; the sequence is VEFINYTTSY…GEGGSFKSMC (258 aa). N-linked (GlcNAc...) asparagine glycans are attached at residues Asn-1396 and Asn-1411. ATP is bound at residue 1426–1433; the sequence is GRTGAGKS. N-linked (GlcNAc...) asparagine glycosylation is found at Asn-1541 and Asn-1552.

The protein belongs to the ABC transporter superfamily.

Its subcellular location is the membrane. Functionally, ABC transporter; part of the gene cluster that mediates the biosynthesis of pyriculol and pyriculariol, two heptaketides that induce lesion formation upon application on rice leaves but are dispensable for pathogenicity. With the MFS transporter MFS1, is most likely responsible for pyriculol and pyriculariol secretion and thereby may contribute to intrinsic resistance. This chain is ABC transporter 7, found in Pyricularia oryzae (strain 70-15 / ATCC MYA-4617 / FGSC 8958) (Rice blast fungus).